The primary structure comprises 530 residues: B3 domain-containing protein REM-like 3 (530 aa).

2 consecutive DNA-binding regions (TF-B3) follow at residues 11 to 103 and 144 to 241; these read KPHF…FGLS and DFVV…FPLE. The segment at 251-276 is disordered; the sequence is SKKVKQEVEHEESVKEETNVESGKLK. Basic and acidic residues predominate over residues 254 to 276; the sequence is VKQEVEHEESVKEETNVESGKLK. 2 DNA-binding regions (TF-B3) span residues 296–393 and 431–530; these read NFVV…FPLE and SFVV…WDKK.

The protein localises to the nucleus. The chain is B3 domain-containing protein REM-like 3 from Arabidopsis thaliana (Mouse-ear cress).